A 320-amino-acid polypeptide reads, in one-letter code: Acetyl-coenzyme A carboxylase carboxyl transferase subunit alpha (320 aa).

One can recognise a CoA carboxyltransferase C-terminal domain in the interval 41-295 (RIEEKAGQAL…GDAIAQAFDE (255 aa)).

It belongs to the AccA family. Acetyl-CoA carboxylase is a heterohexamer composed of biotin carboxyl carrier protein (AccB), biotin carboxylase (AccC) and two subunits each of ACCase subunit alpha (AccA) and ACCase subunit beta (AccD).

It is found in the cytoplasm. It catalyses the reaction N(6)-carboxybiotinyl-L-lysyl-[protein] + acetyl-CoA = N(6)-biotinyl-L-lysyl-[protein] + malonyl-CoA. Its pathway is lipid metabolism; malonyl-CoA biosynthesis; malonyl-CoA from acetyl-CoA: step 1/1. Its function is as follows. Component of the acetyl coenzyme A carboxylase (ACC) complex. First, biotin carboxylase catalyzes the carboxylation of biotin on its carrier protein (BCCP) and then the CO(2) group is transferred by the carboxyltransferase to acetyl-CoA to form malonyl-CoA. The sequence is that of Acetyl-coenzyme A carboxylase carboxyl transferase subunit alpha from Bradyrhizobium sp. (strain ORS 278).